The chain runs to 136 residues: Large ribosomal subunit protein uL16 (136 aa).

This sequence belongs to the universal ribosomal protein uL16 family. Part of the 50S ribosomal subunit.

In terms of biological role, binds 23S rRNA and is also seen to make contacts with the A and possibly P site tRNAs. The protein is Large ribosomal subunit protein uL16 of Photobacterium profundum (strain SS9).